Here is a 418-residue protein sequence, read N- to C-terminus: MASEVAQIPAEETPAVAAAEKSEEPEKSAAPPADSAAAPAAAPAVEKAEDADGEKKDGEAGKQDKQQDGEEPKKDEAVAAPVATKSEAPPAQKFNVHKTNFEKDIIYLYQFSRTPLLPSLSPYCLKVETWLRLVGLKYENVDHKMRFRSKKGQLPFIELNGEEIADSAIIIKELSSKYEKYLDSGLTAEQRNVSYATIAMLENHLIWIIFYWRAKYPDNVLKGYKVNLQHALGLRLPNSILNFFFKITFGRKWFQGTKKLKAHGIGVHSAEEIEEFGKDDLKVLSEMLDCKPFFFGDEPTTLDVVAFAVLSQLHYLSKDIAYPLRDYMTEKCPNLIGHVSRMKDKCFPDWDEICTKLDLNAHIPKPEPETKEGKEGGEQEKSNEQEGTEGDKIEKELEKDKSNEKESTEENKEKEETK.

Disordered regions lie at residues 1–95 (MASE…QKFN) and 361–418 (AHIP…EETK). 2 stretches are compositionally biased toward low complexity: residues 9–19 (PAEETPAVAAA) and 28–45 (SAAP…APAV). Basic and acidic residues-rich tracts occupy residues 46–77 (EKAE…KDEA) and 364–418 (PKPE…EETK).

The protein belongs to the FAX family.

Together with Abl, involved in embryonic axonal development. The protein is Failed axon connections (fax) of Drosophila melanogaster (Fruit fly).